The primary structure comprises 344 residues: MPRPRVSELSQRQAPRLRSSSSTSDSNHSNRLITTDQSFKPGVDRKSPRSGGPNSDPLGQKKLGGRISDLESQLGQAQEELRLLKEQLANAEAVKKQAQDELHKKSKKPNPLARVEESATEAERIDRDEIPGDVQKETDVFEVPVEKIAVEEEELRSGNDEAEKLVAKEDEIKMLKARLYDMEKEHESLGKENESLKNQLSDSASEISNVKANEDEMVSKVSRIGEELEESRAKTAHLKEKLESMEEAKDALEAEMKKLRVQTEQWRKAADAAAAVLSGEFEMNGRDRSGSTEKYYAGGFFDPSAGFMDPPGMADDYDDGLGSGKRKSSGMKMFGELWRKKGQK.

4 disordered regions span residues 1 to 74 (MPRP…ESQL), 92 to 139 (EAVK…KETD), 186 to 218 (HESL…DEMV), and 307 to 344 (FMDP…KGQK). Over residues 19–29 (SSSSTSDSNHS) the composition is skewed to low complexity. Residues 60–108 (QKKLGGRISDLESQLGQAQEELRLLKEQLANAEAVKKQAQDELHKKSKK) are a coiled coil. Composition is skewed to basic and acidic residues over residues 93 to 103 (AVKKQAQDELH), 114 to 139 (RVEE…KETD), and 186 to 195 (HESLGKENES). The stretch at 145–273 (VEKIAVEEEE…EQWRKAADAA (129 aa)) forms a coiled coil. The segment covering 196 to 211 (LKNQLSDSASEISNVK) has biased composition (polar residues).

The protein belongs to the ICR family. Homooligomer. Interacts with ARAC3, ARAC4, ARAC8, ARAC11 and SEC3A, but not with ICR2 or EXO70A1. In terms of tissue distribution, expressed in mature and germinating pollen. Expressed throughout the embryo but not in the hypophysis and quiescent center (QC). In roots, absent from the QC and the stem cells.

Its subcellular location is the cell membrane. It localises to the nucleus. Its function is as follows. Acts as a scaffold, mediating interaction of ROPs with different proteins. Required for primary and adventitious root maintenance, but not for their formation. Promotes the stabilization of ARAC11 on the plasma membrane of the pollen tube initiation site but not the activation of ARAC11. Regulates directionality of polar auxin transport, and is required for the formation of a stable auxin maximum and tip localized auxin gradient during embryogenesis, organogenesis, and meristem activity. Involved in exocytosis and in the recycling of PIN proteins back to the plasma membrane. The chain is Interactor of constitutive active ROPs 1 (ICR1) from Arabidopsis thaliana (Mouse-ear cress).